The primary structure comprises 118 residues: Large ribosomal subunit protein bL19 (118 aa).

It belongs to the bacterial ribosomal protein bL19 family.

Its function is as follows. This protein is located at the 30S-50S ribosomal subunit interface and may play a role in the structure and function of the aminoacyl-tRNA binding site. The polypeptide is Large ribosomal subunit protein bL19 (Alcanivorax borkumensis (strain ATCC 700651 / DSM 11573 / NCIMB 13689 / SK2)).